Consider the following 654-residue polypeptide: Acetyl-coenzyme A synthetase (654 aa).

Residues 190–193 (RGGK) and T313 each bind CoA. Residues 389–391 (GEP), 413–418 (DTWWQT), D504, and R519 contribute to the ATP site. CoA is bound at residue S527. Position 530 (R530) interacts with ATP. Mg(2+)-binding residues include V541, H543, and V546. K613 is modified (N6-acetyllysine).

Belongs to the ATP-dependent AMP-binding enzyme family. Mg(2+) is required as a cofactor. Post-translationally, acetylated. Deacetylation by the SIR2-homolog deacetylase activates the enzyme.

It catalyses the reaction acetate + ATP + CoA = acetyl-CoA + AMP + diphosphate. In terms of biological role, catalyzes the conversion of acetate into acetyl-CoA (AcCoA), an essential intermediate at the junction of anabolic and catabolic pathways. AcsA undergoes a two-step reaction. In the first half reaction, AcsA combines acetate with ATP to form acetyl-adenylate (AcAMP) intermediate. In the second half reaction, it can then transfer the acetyl group from AcAMP to the sulfhydryl group of CoA, forming the product AcCoA. The polypeptide is Acetyl-coenzyme A synthetase (Leptospira biflexa serovar Patoc (strain Patoc 1 / Ames)).